Consider the following 616-residue polypeptide: Dihydroxy-acid dehydratase (616 aa).

Aspartate 81 serves as a coordination point for Mg(2+). Position 122 (cysteine 122) interacts with [2Fe-2S] cluster. The Mg(2+) site is built by aspartate 123 and lysine 124. Lysine 124 is subject to N6-carboxylysine. Position 195 (cysteine 195) interacts with [2Fe-2S] cluster. Residue glutamate 491 participates in Mg(2+) binding. Serine 517 serves as the catalytic Proton acceptor.

The protein belongs to the IlvD/Edd family. In terms of assembly, homodimer. It depends on [2Fe-2S] cluster as a cofactor. Requires Mg(2+) as cofactor.

The catalysed reaction is (2R)-2,3-dihydroxy-3-methylbutanoate = 3-methyl-2-oxobutanoate + H2O. It catalyses the reaction (2R,3R)-2,3-dihydroxy-3-methylpentanoate = (S)-3-methyl-2-oxopentanoate + H2O. It participates in amino-acid biosynthesis; L-isoleucine biosynthesis; L-isoleucine from 2-oxobutanoate: step 3/4. Its pathway is amino-acid biosynthesis; L-valine biosynthesis; L-valine from pyruvate: step 3/4. Functions in the biosynthesis of branched-chain amino acids. Catalyzes the dehydration of (2R,3R)-2,3-dihydroxy-3-methylpentanoate (2,3-dihydroxy-3-methylvalerate) into 2-oxo-3-methylpentanoate (2-oxo-3-methylvalerate) and of (2R)-2,3-dihydroxy-3-methylbutanoate (2,3-dihydroxyisovalerate) into 2-oxo-3-methylbutanoate (2-oxoisovalerate), the penultimate precursor to L-isoleucine and L-valine, respectively. This is Dihydroxy-acid dehydratase from Pectobacterium atrosepticum (strain SCRI 1043 / ATCC BAA-672) (Erwinia carotovora subsp. atroseptica).